The following is a 125-amino-acid chain: Small ribosomal subunit protein uS13 (125 aa).

A disordered region spans residues 95 to 125; that stretch reads GLPLRGQRTKTNARTRKGKRKTVANKKIASK.

This sequence belongs to the universal ribosomal protein uS13 family. Part of the 30S ribosomal subunit. Forms a loose heterodimer with protein S19. Forms two bridges to the 50S subunit in the 70S ribosome.

In terms of biological role, located at the top of the head of the 30S subunit, it contacts several helices of the 16S rRNA. In the 70S ribosome it contacts the 23S rRNA (bridge B1a) and protein L5 of the 50S subunit (bridge B1b), connecting the 2 subunits; these bridges are implicated in subunit movement. Contacts the tRNAs in the A and P-sites. In Borreliella burgdorferi (strain ATCC 35210 / DSM 4680 / CIP 102532 / B31) (Borrelia burgdorferi), this protein is Small ribosomal subunit protein uS13.